A 63-amino-acid chain; its full sequence is Synergistic-type venom protein C9S3, chain 1 (63 aa).

3 disulfide bridges follow: cysteine 3–cysteine 24, cysteine 17–cysteine 42, and cysteine 46–cysteine 57.

Belongs to the three-finger toxin family. Short-chain subfamily. Aminergic toxin sub-subfamily. Heterodimer of C9S3 chain 1 and chain 2 (AC P01409); disulfide-linked. Expressed by the venom gland.

The protein resides in the secreted. Functionally, this protein shows a synergetic toxic effect in that it enhances the toxicity of other toxins. The chain is Synergistic-type venom protein C9S3, chain 1 from Dendroaspis angusticeps (Eastern green mamba).